A 162-amino-acid polypeptide reads, in one-letter code: 2-C-methyl-D-erythritol 2,4-cyclodiphosphate synthase (162 aa).

A divalent metal cation contacts are provided by D12 and H14. Residues 12-14 (DVH) and 38-39 (HS) each bind 4-CDP-2-C-methyl-D-erythritol 2-phosphate. An a divalent metal cation-binding site is contributed by H46. Residues 60–62 (DIG), 65–69 (FPDTD), and R146 contribute to the 4-CDP-2-C-methyl-D-erythritol 2-phosphate site.

Belongs to the IspF family. Homotrimer. Requires a divalent metal cation as cofactor.

It catalyses the reaction 4-CDP-2-C-methyl-D-erythritol 2-phosphate = 2-C-methyl-D-erythritol 2,4-cyclic diphosphate + CMP. The protein operates within isoprenoid biosynthesis; isopentenyl diphosphate biosynthesis via DXP pathway; isopentenyl diphosphate from 1-deoxy-D-xylulose 5-phosphate: step 4/6. In terms of biological role, involved in the biosynthesis of isopentenyl diphosphate (IPP) and dimethylallyl diphosphate (DMAPP), two major building blocks of isoprenoid compounds. Catalyzes the conversion of 4-diphosphocytidyl-2-C-methyl-D-erythritol 2-phosphate (CDP-ME2P) to 2-C-methyl-D-erythritol 2,4-cyclodiphosphate (ME-CPP) with a corresponding release of cytidine 5-monophosphate (CMP). The chain is 2-C-methyl-D-erythritol 2,4-cyclodiphosphate synthase from Bordetella avium (strain 197N).